The primary structure comprises 552 residues: Glutamine-dependent NAD(+) synthetase (552 aa).

In terms of domain architecture, CN hydrolase spans 5–245; sequence FRITLAQLNP…EAVVHVDLER (241 aa). Glutamate 45 serves as the catalytic Proton acceptor; for glutaminase activity. The For glutaminase activity role is filled by lysine 113. Cysteine 149 acts as the Nucleophile; for glutaminase activity in catalysis. Serine 175 and lysine 181 together coordinate L-glutamine. Residues 275–552 form a ligase region; the sequence is LQDYLRKSGF…PMVNRWRDQS (278 aa). 290–297 contributes to the ATP binding site; that stretch reads GLSGGIDS. Deamido-NAD(+) is bound at residue asparagine 373. Threonine 397 contacts ATP. The deamido-NAD(+) site is built by glutamate 402 and lysine 521.

The protein in the C-terminal section; belongs to the NAD synthetase family.

The enzyme catalyses deamido-NAD(+) + L-glutamine + ATP + H2O = L-glutamate + AMP + diphosphate + NAD(+) + H(+). The protein operates within cofactor biosynthesis; NAD(+) biosynthesis; NAD(+) from deamido-NAD(+) (L-Gln route): step 1/1. Its function is as follows. Catalyzes the ATP-dependent amidation of deamido-NAD to form NAD. Uses L-glutamine as a nitrogen source. This chain is Glutamine-dependent NAD(+) synthetase, found in Rhodobacter capsulatus (Rhodopseudomonas capsulata).